The chain runs to 417 residues: Cell division protein FtsA (417 aa).

It belongs to the FtsA/MreB family. Self-interacts. Interacts with FtsZ.

The protein localises to the cell inner membrane. Functionally, cell division protein that is involved in the assembly of the Z ring. May serve as a membrane anchor for the Z ring. The protein is Cell division protein FtsA of Pseudomonas aeruginosa (strain ATCC 15692 / DSM 22644 / CIP 104116 / JCM 14847 / LMG 12228 / 1C / PRS 101 / PAO1).